The chain runs to 212 residues: MSDFLTIAIPKGRILEESVALFGKIGIHCDELLSNTRKLIFENREQRMRYMIVRATDVPTYVEYGCADLGIVGKDTLMEQEKDLYEPLDLKFGYCRMMVAEPAGLARDDDPSSWSNIRIATKYPNVTEKYFAKKGVQVEIIKLYGSIELAPLVGLSERIVDLVSTGETLRQNGLVEVETIAEITTRLIVNRASLKTKHPRITEIIEGLEKHV.

This sequence belongs to the ATP phosphoribosyltransferase family. Short subfamily. Heteromultimer composed of HisG and HisZ subunits.

It localises to the cytoplasm. It carries out the reaction 1-(5-phospho-beta-D-ribosyl)-ATP + diphosphate = 5-phospho-alpha-D-ribose 1-diphosphate + ATP. Its pathway is amino-acid biosynthesis; L-histidine biosynthesis; L-histidine from 5-phospho-alpha-D-ribose 1-diphosphate: step 1/9. Functionally, catalyzes the condensation of ATP and 5-phosphoribose 1-diphosphate to form N'-(5'-phosphoribosyl)-ATP (PR-ATP). Has a crucial role in the pathway because the rate of histidine biosynthesis seems to be controlled primarily by regulation of HisG enzymatic activity. The polypeptide is ATP phosphoribosyltransferase (Geobacter metallireducens (strain ATCC 53774 / DSM 7210 / GS-15)).